Here is a 122-residue protein sequence, read N- to C-terminus: Small ribosomal subunit protein uS13 (122 aa).

A disordered region spans residues 92–122; it reads HRMGLPVRGQRTKTNARTRKGPSKPVSGKKK. Positions 101–122 are enriched in basic residues; sequence QRTKTNARTRKGPSKPVSGKKK.

It belongs to the universal ribosomal protein uS13 family. In terms of assembly, part of the 30S ribosomal subunit. Forms a loose heterodimer with protein S19. Forms two bridges to the 50S subunit in the 70S ribosome.

Functionally, located at the top of the head of the 30S subunit, it contacts several helices of the 16S rRNA. In the 70S ribosome it contacts the 23S rRNA (bridge B1a) and protein L5 of the 50S subunit (bridge B1b), connecting the 2 subunits; these bridges are implicated in subunit movement. Contacts the tRNAs in the A and P-sites. The sequence is that of Small ribosomal subunit protein uS13 from Ruminiclostridium cellulolyticum (strain ATCC 35319 / DSM 5812 / JCM 6584 / H10) (Clostridium cellulolyticum).